The primary structure comprises 476 residues: tRNA(Ile)-lysidine synthase (476 aa).

Ser-30 to Ser-35 lines the ATP pocket.

It belongs to the tRNA(Ile)-lysidine synthase family.

Its subcellular location is the cytoplasm. It catalyses the reaction cytidine(34) in tRNA(Ile2) + L-lysine + ATP = lysidine(34) in tRNA(Ile2) + AMP + diphosphate + H(+). Ligates lysine onto the cytidine present at position 34 of the AUA codon-specific tRNA(Ile) that contains the anticodon CAU, in an ATP-dependent manner. Cytidine is converted to lysidine, thus changing the amino acid specificity of the tRNA from methionine to isoleucine. This Bacillus cereus (strain ZK / E33L) protein is tRNA(Ile)-lysidine synthase.